The primary structure comprises 150 residues: Cytochrome c oxidase subunit 5A, mitochondrial (150 aa).

Residues 1–41 (MLGAALRRCAVAATTWAGPRGLLHSARTPGPAAAIQSVRCY) constitute a mitochondrion transit peptide. Positions 2–20 (LGAALRRCAVAATTWAGPR) match the SIFI-degron motif. N6-acetyllysine occurs at positions 87 and 113. Thr141 carries the post-translational modification Phosphothreonine.

The protein belongs to the cytochrome c oxidase subunit 5A family. Component of the cytochrome c oxidase (complex IV, CIV), a multisubunit enzyme composed of 14 subunits. The complex is composed of a catalytic core of 3 subunits MT-CO1, MT-CO2 and MT-CO3, encoded in the mitochondrial DNA, and 11 supernumerary subunits COX4I, COX5A, COX5B, COX6A, COX6B, COX6C, COX7A, COX7B, COX7C, COX8 and NDUFA4, which are encoded in the nuclear genome. The complex exists as a monomer or a dimer and forms supercomplexes (SCs) in the inner mitochondrial membrane with NADH-ubiquinone oxidoreductase (complex I, CI) and ubiquinol-cytochrome c oxidoreductase (cytochrome b-c1 complex, complex III, CIII), resulting in different assemblies (supercomplex SCI(1)III(2)IV(1) and megacomplex MCI(2)III(2)IV(2)). Interacts with AFG1L. Interacts with RAB5IF. Post-translationally, in response to mitochondrial stress, the precursor protein is ubiquitinated by the SIFI complex in the cytoplasm before mitochondrial import, leading to its degradation. Within the SIFI complex, UBR4 initiates ubiquitin chain that are further elongated or branched by KCMF1.

It is found in the mitochondrion inner membrane. Its pathway is energy metabolism; oxidative phosphorylation. Its function is as follows. Component of the cytochrome c oxidase, the last enzyme in the mitochondrial electron transport chain which drives oxidative phosphorylation. The respiratory chain contains 3 multisubunit complexes succinate dehydrogenase (complex II, CII), ubiquinol-cytochrome c oxidoreductase (cytochrome b-c1 complex, complex III, CIII) and cytochrome c oxidase (complex IV, CIV), that cooperate to transfer electrons derived from NADH and succinate to molecular oxygen, creating an electrochemical gradient over the inner membrane that drives transmembrane transport and the ATP synthase. Cytochrome c oxidase is the component of the respiratory chain that catalyzes the reduction of oxygen to water. Electrons originating from reduced cytochrome c in the intermembrane space (IMS) are transferred via the dinuclear copper A center (CU(A)) of subunit 2 and heme A of subunit 1 to the active site in subunit 1, a binuclear center (BNC) formed by heme A3 and copper B (CU(B)). The BNC reduces molecular oxygen to 2 water molecules using 4 electrons from cytochrome c in the IMS and 4 protons from the mitochondrial matrix. This is Cytochrome c oxidase subunit 5A, mitochondrial (COX5A) from Macaca mulatta (Rhesus macaque).